The sequence spans 38 residues: Bacteriocin curvaticin FS47 (38 aa).

It is found in the secreted. Functionally, bacteriocin active against Listeria monocytogenes, Pediococcus, Enterococcus, Lactobacilli and Bacilli. The protein is Bacteriocin curvaticin FS47 of Latilactobacillus curvatus (Lactobacillus curvatus).